The primary structure comprises 247 residues: 3-deoxy-manno-octulosonate cytidylyltransferase (247 aa).

Belongs to the KdsB family.

Its subcellular location is the cytoplasm. It catalyses the reaction 3-deoxy-alpha-D-manno-oct-2-ulosonate + CTP = CMP-3-deoxy-beta-D-manno-octulosonate + diphosphate. It participates in nucleotide-sugar biosynthesis; CMP-3-deoxy-D-manno-octulosonate biosynthesis; CMP-3-deoxy-D-manno-octulosonate from 3-deoxy-D-manno-octulosonate and CTP: step 1/1. The protein operates within bacterial outer membrane biogenesis; lipopolysaccharide biosynthesis. Functionally, activates KDO (a required 8-carbon sugar) for incorporation into bacterial lipopolysaccharide in Gram-negative bacteria. The protein is 3-deoxy-manno-octulosonate cytidylyltransferase of Methylorubrum populi (strain ATCC BAA-705 / NCIMB 13946 / BJ001) (Methylobacterium populi).